A 72-amino-acid chain; its full sequence is Translation initiation factor IF-1 (72 aa).

An S1-like domain is found at 1-72 (MAKQSAIEQD…SKGRIVFRYK (72 aa)).

It belongs to the IF-1 family. In terms of assembly, component of the 30S ribosomal translation pre-initiation complex which assembles on the 30S ribosome in the order IF-2 and IF-3, IF-1 and N-formylmethionyl-tRNA(fMet); mRNA recruitment can occur at any time during PIC assembly.

The protein resides in the cytoplasm. One of the essential components for the initiation of protein synthesis. Stabilizes the binding of IF-2 and IF-3 on the 30S subunit to which N-formylmethionyl-tRNA(fMet) subsequently binds. Helps modulate mRNA selection, yielding the 30S pre-initiation complex (PIC). Upon addition of the 50S ribosomal subunit IF-1, IF-2 and IF-3 are released leaving the mature 70S translation initiation complex. The chain is Translation initiation factor IF-1 from Bacteroides fragilis (strain ATCC 25285 / DSM 2151 / CCUG 4856 / JCM 11019 / LMG 10263 / NCTC 9343 / Onslow / VPI 2553 / EN-2).